Consider the following 157-residue polypeptide: ATP synthase subunit b (157 aa).

The helical transmembrane segment at 7-29 threads the bilayer; that stretch reads MFGQLIMFTMFTWFCMKFVWPPI.

Belongs to the ATPase B chain family. As to quaternary structure, F-type ATPases have 2 components, F(1) - the catalytic core - and F(0) - the membrane proton channel. F(1) has five subunits: alpha(3), beta(3), gamma(1), delta(1), epsilon(1). F(0) has three main subunits: a(1), b(2) and c(10-14). The alpha and beta chains form an alternating ring which encloses part of the gamma chain. F(1) is attached to F(0) by a central stalk formed by the gamma and epsilon chains, while a peripheral stalk is formed by the delta and b chains.

It is found in the cell inner membrane. Functionally, f(1)F(0) ATP synthase produces ATP from ADP in the presence of a proton or sodium gradient. F-type ATPases consist of two structural domains, F(1) containing the extramembraneous catalytic core and F(0) containing the membrane proton channel, linked together by a central stalk and a peripheral stalk. During catalysis, ATP synthesis in the catalytic domain of F(1) is coupled via a rotary mechanism of the central stalk subunits to proton translocation. In terms of biological role, component of the F(0) channel, it forms part of the peripheral stalk, linking F(1) to F(0). The protein is ATP synthase subunit b of Ruthia magnifica subsp. Calyptogena magnifica.